A 629-amino-acid polypeptide reads, in one-letter code: Extracellular metalloproteinase 10 (629 aa).

A signal peptide spans 1–19 (MHGLLLAAGLLSLPLYTIA). The propeptide occupies 20-240 (HTQPSGALSR…VHNVVDYVAH (221 aa)). Residues Asn-281 and Asn-331 are each glycosylated (N-linked (GlcNAc...) asparagine). His-424 serves as a coordination point for Zn(2+). Residue Glu-425 is part of the active site. A Zn(2+)-binding site is contributed by His-428. 2 N-linked (GlcNAc...) asparagine glycosylation sites follow: Asn-469 and Asn-617.

Belongs to the peptidase M36 family. Zn(2+) serves as cofactor.

The protein localises to the secreted. Secreted metalloproteinase that allows assimilation of proteinaceous substrates and probably acts as a virulence factor. In Coccidioides posadasii (strain C735) (Valley fever fungus), this protein is Extracellular metalloproteinase 10 (MEP10).